Consider the following 519-residue polypeptide: Sterile alpha motif domain-containing protein 1 (519 aa).

Residues 1-11 (MAGPPALPPPE) show a composition bias toward pro residues. Disordered regions lie at residues 1 to 30 (MAGP…ASPH) and 87 to 232 (YKGS…PVSL). The span at 12 to 29 (TAAAATTAAAASSSAASP) shows a compositional bias: low complexity. The 77-residue stretch at 23–99 (SSSAASPHYQ…SISYRNAARV (77 aa)) folds into the SAMD1-like winged helix (WH) domain. Residue threonine 107 is modified to Phosphothreonine. A compositionally biased stretch (pro residues) spans 108–133 (PPAPPRVPRGGPAAPPPTPAPPPAPV). The span at 134-147 (AAPTRAPRAAAATA) shows a compositional bias: low complexity. Serine 150 carries the phosphoserine modification. Positions 157–166 (GPRAQRAAPL) are enriched in low complexity. Residues 167–217 (AAPPPAPAAPPAAAPPAGPRRAPPPAVAAREPPAPPQQQQPPPPQPQPPPE) are compositionally biased toward pro residues. The span at 218–230 (GGAARAGGPARPV) shows a compositional bias: low complexity. Serine 242 carries the post-translational modification Phosphoserine. A compositionally biased stretch (basic and acidic residues) spans 261–271 (EAARGRLERTR). Disordered regions lie at residues 261–381 (EAAR…PGSC) and 417–439 (PALP…KPTD). Positions 308 to 325 (KEEEDEDEDEEEEEEDNV) are enriched in acidic residues. An SAM domain is found at 443-511 (WTVMDVVEYF…KVLQQGHFED (69 aa)).

Homopolymerize into a closed pentameric ring. Interacts (via SAM domain) with L3MBTL3 (via SAM domain); the interaction mediates L3MBTL3 binding to chromatin. Interacts (via WH domain) with KDM1A; the interaction modulates KDM1A function. In terms of tissue distribution, expressed to similar levels in different organs. Expressed at higher levels in bone marrow, osteoclasts and spleen. Expressed in vascular smooth muscle cells.

It is found in the nucleus. It localises to the chromosome. The protein localises to the secreted. Functionally, unmethylated CpG islands (CGIs)-binding protein which localizes to H3K4me3-decorated CGIs, where it acts as a transcriptional repressor. Tethers L3MBTL3 to chromatin and interacts with the KDM1A histone demethylase complex to modulate H3K4me2 and H3K4me3 levels at CGIs. Plays a role in atherogenesis by binding with LDL on cell surface and promoting LDL oxidation which leads to the formation of foam cell. The sequence is that of Sterile alpha motif domain-containing protein 1 from Mus musculus (Mouse).